An 84-amino-acid polypeptide reads, in one-letter code: Putative ribosomal RNA large subunit methyltransferase H 2 (84 aa).

S-adenosyl-L-methionine contacts are provided by residues Gly-33 and 52–57; that span reads FSKMTF.

It belongs to the RNA methyltransferase RlmH family. Homodimer.

The protein resides in the cytoplasm. It carries out the reaction pseudouridine(1915) in 23S rRNA + S-adenosyl-L-methionine = N(3)-methylpseudouridine(1915) in 23S rRNA + S-adenosyl-L-homocysteine + H(+). Its function is as follows. Specifically methylates the pseudouridine at position 1915 (m3Psi1915) in 23S rRNA. The chain is Putative ribosomal RNA large subunit methyltransferase H 2 (rlmH2) from Clostridium perfringens (strain SM101 / Type A).